A 157-amino-acid chain; its full sequence is Protein-export protein SecB (157 aa).

This sequence belongs to the SecB family. Homotetramer, a dimer of dimers. One homotetramer interacts with 1 SecA dimer.

The protein localises to the cytoplasm. In terms of biological role, one of the proteins required for the normal export of preproteins out of the cell cytoplasm. It is a molecular chaperone that binds to a subset of precursor proteins, maintaining them in a translocation-competent state. It also specifically binds to its receptor SecA. The sequence is that of Protein-export protein SecB from Tolumonas auensis (strain DSM 9187 / NBRC 110442 / TA 4).